Here is a 151-residue protein sequence, read N- to C-terminus: Lipoprotein signal peptidase (151 aa).

Transmembrane regions (helical) follow at residues 33 to 53 (VIPD…FGLL), 58 to 78 (WIFI…QFKI), and 87 to 107 (LTLG…LFIG). Active-site residues include Asp-111 and Asp-126. A helical transmembrane segment spans residues 120 to 140 (FVFNFADSAIVVGVGLLMILM).

It belongs to the peptidase A8 family.

The protein resides in the cell membrane. The catalysed reaction is Release of signal peptides from bacterial membrane prolipoproteins. Hydrolyzes -Xaa-Yaa-Zaa-|-(S,diacylglyceryl)Cys-, in which Xaa is hydrophobic (preferably Leu), and Yaa (Ala or Ser) and Zaa (Gly or Ala) have small, neutral side chains.. The protein operates within protein modification; lipoprotein biosynthesis (signal peptide cleavage). Functionally, this protein specifically catalyzes the removal of signal peptides from prolipoproteins. The sequence is that of Lipoprotein signal peptidase from Desulfitobacterium hafniense (strain DSM 10664 / DCB-2).